We begin with the raw amino-acid sequence, 283 residues long: NAD kinase (283 aa).

Residue D66 is the Proton acceptor of the active site. NAD(+) is bound by residues 66 to 67 (DG), 140 to 141 (ND), R151, R168, D170, and Q240.

It belongs to the NAD kinase family. The cofactor is a divalent metal cation.

The protein localises to the cytoplasm. It catalyses the reaction NAD(+) + ATP = ADP + NADP(+) + H(+). Functionally, involved in the regulation of the intracellular balance of NAD and NADP, and is a key enzyme in the biosynthesis of NADP. Catalyzes specifically the phosphorylation on 2'-hydroxyl of the adenosine moiety of NAD to yield NADP. The protein is NAD kinase of Syntrophobacter fumaroxidans (strain DSM 10017 / MPOB).